A 224-amino-acid chain; its full sequence is 2-phospho-L-lactate guanylyltransferase (224 aa).

The protein belongs to the CofC family. In terms of assembly, homodimer.

The catalysed reaction is (2S)-2-phospholactate + GTP + H(+) = (2S)-lactyl-2-diphospho-5'-guanosine + diphosphate. Its pathway is cofactor biosynthesis; coenzyme F420 biosynthesis. Its function is as follows. Guanylyltransferase that catalyzes the activation of (2S)-2-phospholactate (2-PL) as (2S)-lactyl-2-diphospho-5'-guanosine, via the condensation of 2-PL with GTP. It is involved in the biosynthesis of coenzyme F420, a hydride carrier cofactor. The protein is 2-phospho-L-lactate guanylyltransferase of Methanobrevibacter smithii (strain ATCC 35061 / DSM 861 / OCM 144 / PS).